The primary structure comprises 124 residues: MADLKAFAEQLVNLTVKEVNELATILKEEYGIEPAAAAVAVAAGPAAGAAAVEEKTSFDVVLKSAGAAKLQVVKAVKEACGLGLKEAKDMVDGAPSVVKEGLAKDEAESLKKTLEEAGAEVELK.

This sequence belongs to the bacterial ribosomal protein bL12 family. In terms of assembly, homodimer. Part of the ribosomal stalk of the 50S ribosomal subunit. Forms a multimeric L10(L12)X complex, where L10 forms an elongated spine to which 2 to 4 L12 dimers bind in a sequential fashion. Binds GTP-bound translation factors.

Functionally, forms part of the ribosomal stalk which helps the ribosome interact with GTP-bound translation factors. Is thus essential for accurate translation. The protein is Large ribosomal subunit protein bL12 of Bacteroides thetaiotaomicron (strain ATCC 29148 / DSM 2079 / JCM 5827 / CCUG 10774 / NCTC 10582 / VPI-5482 / E50).